A 281-amino-acid polypeptide reads, in one-letter code: Aldo-keto reductase MAP_3007 (281 aa).

Tyr56 serves as the catalytic Proton donor. Leu196, Ile234, Arg236, Ser237, Ala238, Ser245, and Arg272 together coordinate NADPH.

This sequence belongs to the aldo/keto reductase family.

This chain is Aldo-keto reductase MAP_3007, found in Mycolicibacterium paratuberculosis (strain ATCC BAA-968 / K-10) (Mycobacterium paratuberculosis).